An 872-amino-acid polypeptide reads, in one-letter code: Alanine--tRNA ligase (872 aa).

Residues His563, His567, Cys665, and His669 each coordinate Zn(2+).

It belongs to the class-II aminoacyl-tRNA synthetase family. Zn(2+) is required as a cofactor.

It localises to the cytoplasm. It carries out the reaction tRNA(Ala) + L-alanine + ATP = L-alanyl-tRNA(Ala) + AMP + diphosphate. Its function is as follows. Catalyzes the attachment of alanine to tRNA(Ala) in a two-step reaction: alanine is first activated by ATP to form Ala-AMP and then transferred to the acceptor end of tRNA(Ala). Also edits incorrectly charged Ser-tRNA(Ala) and Gly-tRNA(Ala) via its editing domain. This Bacteroides thetaiotaomicron (strain ATCC 29148 / DSM 2079 / JCM 5827 / CCUG 10774 / NCTC 10582 / VPI-5482 / E50) protein is Alanine--tRNA ligase.